The following is a 176-amino-acid chain: PKHD-type hydroxylase Mfla_0096 (176 aa).

In terms of domain architecture, Fe2OG dioxygenase spans 78-147; the sequence is KVFPPLFNRY…NQIARGTYGA (70 aa).

Requires Fe(2+) as cofactor. The cofactor is L-ascorbate.

The protein is PKHD-type hydroxylase Mfla_0096 of Methylobacillus flagellatus (strain ATCC 51484 / DSM 6875 / VKM B-1610 / KT).